The following is a 74-amino-acid chain: Protein SlyX homolog (74 aa).

Belongs to the SlyX family.

In Neisseria meningitidis serogroup C / serotype 2a (strain ATCC 700532 / DSM 15464 / FAM18), this protein is Protein SlyX homolog.